The sequence spans 374 residues: Magnesium-chelatase subunit ChlI (374 aa).

47–54 (GDRGTGKS) provides a ligand contact to ATP.

It belongs to the Mg-chelatase subunits D/I family.

It carries out the reaction protoporphyrin IX + Mg(2+) + ATP + H2O = Mg-protoporphyrin IX + ADP + phosphate + 3 H(+). It participates in porphyrin-containing compound metabolism; chlorophyll biosynthesis. In terms of biological role, involved in chlorophyll biosynthesis; introduces a magnesium ion into protoporphyrin IX to yield Mg-protoporphyrin IX. In Nostoc sp. (strain PCC 7120 / SAG 25.82 / UTEX 2576), this protein is Magnesium-chelatase subunit ChlI (chlI).